We begin with the raw amino-acid sequence, 215 residues long: MRRVLITGFEPFGGERINPSWEVVKQMNDLMMGGVRIVARQLPCAFGEALTALNTAIDDVQPVLVLAIGQAGGRADITIERVAINVDDARIPDNLGNQPVDQPIIQEGPAAYFTRLPIKAMVQGIREAGIPASVSQTAGTYVCNHVMYGLLHRLNQFNNEVKGGFIHIPYLPEQAVDHPGAPSMSAQSVLVALELAISIALQIEHDLHITGGPVH.

Active-site residues include E80, C143, and H167.

It belongs to the peptidase C15 family. Homotetramer.

It is found in the cytoplasm. The catalysed reaction is Release of an N-terminal pyroglutamyl group from a polypeptide, the second amino acid generally not being Pro.. Its function is as follows. Removes 5-oxoproline from various penultimate amino acid residues except L-proline. The sequence is that of Pyrrolidone-carboxylate peptidase from Yersinia pseudotuberculosis serotype O:1b (strain IP 31758).